Consider the following 312-residue polypeptide: Acetylglutamate kinase (312 aa).

Residues 74–75 (GG), Arg96, and Asn195 contribute to the substrate site.

It belongs to the acetylglutamate kinase family. ArgB subfamily.

The protein localises to the cytoplasm. It catalyses the reaction N-acetyl-L-glutamate + ATP = N-acetyl-L-glutamyl 5-phosphate + ADP. It functions in the pathway amino-acid biosynthesis; L-arginine biosynthesis; N(2)-acetyl-L-ornithine from L-glutamate: step 2/4. Functionally, catalyzes the ATP-dependent phosphorylation of N-acetyl-L-glutamate. The chain is Acetylglutamate kinase from Nocardioides sp. (strain ATCC BAA-499 / JS614).